A 252-amino-acid chain; its full sequence is PF03932 family protein CutC (252 aa).

Belongs to the CutC family.

Its subcellular location is the cytoplasm. The protein is PF03932 family protein CutC of Sodalis glossinidius (strain morsitans).